Here is a 90-residue protein sequence, read N- to C-terminus: Potassium channel toxin BmTXK-beta (90 aa).

The first 22 residues, 1–22 (MMKQQFFLFLAVIVMISSVIEA), serve as a signal peptide directing secretion. The propeptide occupies 23–29 (GRGKEIM). The region spanning 55 to 90 (EYACPVIEKWCEDHCAAKKAIGKCEDTECKCLKLRK) is the BetaSPN-type CS-alpha/beta domain. 3 disulfide bridges follow: C58–C78, C65–C83, and C69–C85.

This sequence belongs to the long chain scorpion toxin family. Class 2 subfamily. Expressed by the venom gland.

Its subcellular location is the secreted. This recombinant peptide reversibly and dose-dependently inhibits the transient outward potassium current (I(To)) of rabbit atrial myocyte and prolongs the action potential duration of rabbit atrial myocyte without affecting the action potential amplitude. Thus, the voltage-gated potassium channels Kv4.1/KCND1, Kv4.2/KCND2, Kv4.3/KCND3 may be the target of this toxin. The polypeptide is Potassium channel toxin BmTXK-beta (Olivierus martensii (Manchurian scorpion)).